We begin with the raw amino-acid sequence, 71 residues long: Translation initiation factor IF-1 (71 aa).

The S1-like domain occupies 1 to 71 (MAKQSAIEQD…LSKARITYRY (71 aa)).

The protein belongs to the IF-1 family. In terms of assembly, component of the 30S ribosomal translation pre-initiation complex which assembles on the 30S ribosome in the order IF-2 and IF-3, IF-1 and N-formylmethionyl-tRNA(fMet); mRNA recruitment can occur at any time during PIC assembly.

The protein localises to the cytoplasm. Its function is as follows. One of the essential components for the initiation of protein synthesis. Stabilizes the binding of IF-2 and IF-3 on the 30S subunit to which N-formylmethionyl-tRNA(fMet) subsequently binds. Helps modulate mRNA selection, yielding the 30S pre-initiation complex (PIC). Upon addition of the 50S ribosomal subunit IF-1, IF-2 and IF-3 are released leaving the mature 70S translation initiation complex. This is Translation initiation factor IF-1 from Flavobacterium johnsoniae (strain ATCC 17061 / DSM 2064 / JCM 8514 / BCRC 14874 / CCUG 350202 / NBRC 14942 / NCIMB 11054 / UW101) (Cytophaga johnsonae).